The chain runs to 224 residues: Phosphoribosylformylglycinamidine synthase subunit PurQ (224 aa).

The Glutamine amidotransferase type-1 domain maps to 2–224 (TVAIIRFGGS…DGQGVLEGFR (223 aa)). The active-site Nucleophile is the Cys85. Catalysis depends on residues His202 and Glu204. Positions 204–224 (ERASLPDIGPTDGQGVLEGFR) are disordered.

In terms of assembly, part of the FGAM synthase complex composed of 1 PurL, 1 PurQ and 2 PurS subunits.

Its subcellular location is the cytoplasm. The enzyme catalyses N(2)-formyl-N(1)-(5-phospho-beta-D-ribosyl)glycinamide + L-glutamine + ATP + H2O = 2-formamido-N(1)-(5-O-phospho-beta-D-ribosyl)acetamidine + L-glutamate + ADP + phosphate + H(+). It carries out the reaction L-glutamine + H2O = L-glutamate + NH4(+). It functions in the pathway purine metabolism; IMP biosynthesis via de novo pathway; 5-amino-1-(5-phospho-D-ribosyl)imidazole from N(2)-formyl-N(1)-(5-phospho-D-ribosyl)glycinamide: step 1/2. Part of the phosphoribosylformylglycinamidine synthase complex involved in the purines biosynthetic pathway. Catalyzes the ATP-dependent conversion of formylglycinamide ribonucleotide (FGAR) and glutamine to yield formylglycinamidine ribonucleotide (FGAM) and glutamate. The FGAM synthase complex is composed of three subunits. PurQ produces an ammonia molecule by converting glutamine to glutamate. PurL transfers the ammonia molecule to FGAR to form FGAM in an ATP-dependent manner. PurS interacts with PurQ and PurL and is thought to assist in the transfer of the ammonia molecule from PurQ to PurL. The sequence is that of Phosphoribosylformylglycinamidine synthase subunit PurQ from Natronomonas pharaonis (strain ATCC 35678 / DSM 2160 / CIP 103997 / JCM 8858 / NBRC 14720 / NCIMB 2260 / Gabara) (Halobacterium pharaonis).